We begin with the raw amino-acid sequence, 110 residues long: Iron-sulfur cluster assembly protein CyaY (110 aa).

The protein belongs to the frataxin family.

Involved in iron-sulfur (Fe-S) cluster assembly. May act as a regulator of Fe-S biogenesis. In Stutzerimonas stutzeri (strain A1501) (Pseudomonas stutzeri), this protein is Iron-sulfur cluster assembly protein CyaY.